Here is a 181-residue protein sequence, read N- to C-terminus: NADH-quinone oxidoreductase subunit I (181 aa).

4Fe-4S ferredoxin-type domains follow at residues 52 to 81 (TRDS…LKKS) and 91 to 120 (EFFR…LISD). Residues Cys61, Cys64, Cys67, Cys71, Cys100, Cys103, Cys106, and Cys110 each contribute to the [4Fe-4S] cluster site.

It belongs to the complex I 23 kDa subunit family. As to quaternary structure, NDH-1 is composed of 13 different subunits. Subunits NuoA, H, J, K, L, M, N constitute the membrane sector of the complex. It depends on [4Fe-4S] cluster as a cofactor.

Its subcellular location is the cell inner membrane. It catalyses the reaction a quinone + NADH + 5 H(+)(in) = a quinol + NAD(+) + 4 H(+)(out). In terms of biological role, NDH-1 shuttles electrons from NADH, via FMN and iron-sulfur (Fe-S) centers, to quinones in the respiratory chain. The immediate electron acceptor for the enzyme in this species is believed to be ubiquinone. Couples the redox reaction to proton translocation (for every two electrons transferred, four hydrogen ions are translocated across the cytoplasmic membrane), and thus conserves the redox energy in a proton gradient. The polypeptide is NADH-quinone oxidoreductase subunit I (Blochmanniella floridana).